Here is a 116-residue protein sequence, read N- to C-terminus: NADPH-dependent 7-cyano-7-deazaguanine reductase (116 aa).

The active-site Thioimide intermediate is Cys-31. Residue Asp-38 is the Proton donor of the active site. Residues 53 to 55 and 72 to 73 contribute to the substrate site; these read IEL and YE.

The protein belongs to the GTP cyclohydrolase I family. QueF type 1 subfamily.

Its subcellular location is the cytoplasm. The enzyme catalyses 7-aminomethyl-7-carbaguanine + 2 NADP(+) = 7-cyano-7-deazaguanine + 2 NADPH + 3 H(+). The protein operates within tRNA modification; tRNA-queuosine biosynthesis. Catalyzes the NADPH-dependent reduction of 7-cyano-7-deazaguanine (preQ0) to 7-aminomethyl-7-deazaguanine (preQ1). This is NADPH-dependent 7-cyano-7-deazaguanine reductase from Pelodictyon phaeoclathratiforme (strain DSM 5477 / BU-1).